Reading from the N-terminus, the 149-residue chain is SsrA-binding protein (149 aa).

The protein belongs to the SmpB family.

It localises to the cytoplasm. Its function is as follows. Required for rescue of stalled ribosomes mediated by trans-translation. Binds to transfer-messenger RNA (tmRNA), required for stable association of tmRNA with ribosomes. tmRNA and SmpB together mimic tRNA shape, replacing the anticodon stem-loop with SmpB. tmRNA is encoded by the ssrA gene; the 2 termini fold to resemble tRNA(Ala) and it encodes a 'tag peptide', a short internal open reading frame. During trans-translation Ala-aminoacylated tmRNA acts like a tRNA, entering the A-site of stalled ribosomes, displacing the stalled mRNA. The ribosome then switches to translate the ORF on the tmRNA; the nascent peptide is terminated with the 'tag peptide' encoded by the tmRNA and targeted for degradation. The ribosome is freed to recommence translation, which seems to be the essential function of trans-translation. This chain is SsrA-binding protein, found in Thermosipho africanus (strain TCF52B).